The sequence spans 58 residues: uncharacterized protein (58 aa).

This is an uncharacterized protein from Phaseolus vulgaris (Kidney bean).